The chain runs to 523 residues: Synaptotagmin-10 (523 aa).

The Vesicular segment spans residues 1–55 (MSFRKEDGVSSLCQKALHIITELCFAGQVEWDKCSGIFPADRSGQGGGGTDISVS). Residues 13–35 (CQKALHIITELCFAGQVEWDKCS) are cysteine motif. Residues 56 to 76 (LLAVVVSFCGLALLVVSLFVF) form a helical membrane-spanning segment. Residues 77 to 523 (WKLCWPCWKS…CSSPRPPSTP (447 aa)) are Cytoplasmic-facing. Phosphothreonine is present on Thr-136. C2 domains lie at 231–352 (TCGK…TVWK) and 363–496 (DLGE…THWH). Asp-262, Asp-268, Asp-320, Phe-321, Asp-322, Ser-325, Asp-328, Asp-394, Asp-400, Asp-454, and Asp-456 together coordinate Ca(2+).

The protein belongs to the synaptotagmin family. Homodimer; disulfide-linked via the cysteine motif. Can also form heterodimers with SYT3, SYT6, SYT7 and SYT9. It depends on Ca(2+) as a cofactor. Highly expressed in the olfactory bulb.

It is found in the cytoplasmic vesicle. Its subcellular location is the secretory vesicle membrane. In terms of biological role, ca(2+) sensor specifically required for the Ca(2+)-dependent exocytosis of secretory vesicles containing IGF1 in neurons of the olfactory bulb. Exocytosis of IGF1 is required for sensory perception of smell. Not involved in Ca(2+)-dependent synaptic vesicle exocytosis. Acts through Ca(2+) and phospholipid binding to the C2 domain: Ca(2+) induces binding of the C2-domains to phospholipid membranes and to assembled SNARE-complexes; both actions contribute to triggering exocytosis. The polypeptide is Synaptotagmin-10 (Mus musculus (Mouse)).